The chain runs to 55 residues: ATP synthase F(0) complex subunit 8 (55 aa).

Residues 10 to 32 (FFTMLTTWLTFLLLIQPKLLSFI) form a helical membrane-spanning segment.

It belongs to the ATPase protein 8 family. In terms of assembly, component of the ATP synthase complex composed at least of ATP5F1A/subunit alpha, ATP5F1B/subunit beta, ATP5MC1/subunit c (homooctomer), MT-ATP6/subunit a, MT-ATP8/subunit 8, ATP5ME/subunit e, ATP5MF/subunit f, ATP5MG/subunit g, ATP5MK/subunit k, ATP5MJ/subunit j, ATP5F1C/subunit gamma, ATP5F1D/subunit delta, ATP5F1E/subunit epsilon, ATP5PF/subunit F6, ATP5PB/subunit b, ATP5PD/subunit d, ATP5PO/subunit OSCP. ATP synthase complex consists of a soluble F(1) head domain (subunits alpha(3) and beta(3)) - the catalytic core - and a membrane F(0) domain - the membrane proton channel (subunits c, a, 8, e, f, g, k and j). These two domains are linked by a central stalk (subunits gamma, delta, and epsilon) rotating inside the F1 region and a stationary peripheral stalk (subunits F6, b, d, and OSCP).

The protein resides in the mitochondrion membrane. In terms of biological role, subunit 8, of the mitochondrial membrane ATP synthase complex (F(1)F(0) ATP synthase or Complex V) that produces ATP from ADP in the presence of a proton gradient across the membrane which is generated by electron transport complexes of the respiratory chain. ATP synthase complex consist of a soluble F(1) head domain - the catalytic core - and a membrane F(1) domain - the membrane proton channel. These two domains are linked by a central stalk rotating inside the F(1) region and a stationary peripheral stalk. During catalysis, ATP synthesis in the catalytic domain of F(1) is coupled via a rotary mechanism of the central stalk subunits to proton translocation. In vivo, can only synthesize ATP although its ATP hydrolase activity can be activated artificially in vitro. Part of the complex F(0) domain. This Guira guira (Guira cuckoo) protein is ATP synthase F(0) complex subunit 8.